The primary structure comprises 378 residues: Ribosomal RNA large subunit methyltransferase G (378 aa).

Belongs to the methyltransferase superfamily. RlmG family.

Its subcellular location is the cytoplasm. It catalyses the reaction guanosine(1835) in 23S rRNA + S-adenosyl-L-methionine = N(2)-methylguanosine(1835) in 23S rRNA + S-adenosyl-L-homocysteine + H(+). Functionally, specifically methylates the guanine in position 1835 (m2G1835) of 23S rRNA. This Shewanella sp. (strain W3-18-1) protein is Ribosomal RNA large subunit methyltransferase G.